The sequence spans 435 residues: MSQKPHLNLIVIGHVDHGKSTLVGRLLMDRGFLDEKTIKEAEEAAKKLGKESEKYAFLLDRLKEERERGVTINLTFMRFETKKYFFTIIDAPGHRDFVKNMITGASQADAAILAVSARKGEFESGMSLEGQTREHIILAKTMGLNQVIVAITKMDVAEPPYDQKRYNEIKETIEKFMKSFGFDMSKVKFIPIVSITGENVTKRSENMKWYNGPTLEEALDMLEIPPKPVDKPLRLPIQEVYSISGVGTVPVGRVESGVMKVGDKIVFMPAGKSAEVRSIETHHTKLEKAEPGDNIGFNVRGIDKKDVKRGDVVGHTTNPPTVAEEFTARVIVVWHPTALAVGYTPVVHVHTASIACRVSEIVARLDPKTGKEAEKNPQFIKQGESAIVKFKPIKPLCVEKFSDFPPLGRFAMRDMGKTVGVGVINDVKPSKIEIK.

The tr-type G domain occupies 4 to 229; that stretch reads KPHLNLIVIG…DMLEIPPKPV (226 aa). The G1 stretch occupies residues 13-20; that stretch reads GHVDHGKS. 13–20 contacts GTP; that stretch reads GHVDHGKS. Residue Ser-20 participates in Mg(2+) binding. The tract at residues 69 to 73 is G2; that stretch reads GVTIN. Residues 90–93 form a G3 region; that stretch reads DAPG. GTP is bound by residues 90 to 94 and 152 to 155; these read DAPGH and TKMD. Residues 152-155 are G4; the sequence is TKMD. The tract at residues 193–195 is G5; that stretch reads VSI.

Belongs to the TRAFAC class translation factor GTPase superfamily. Classic translation factor GTPase family. EF-Tu/EF-1A subfamily.

It localises to the cytoplasm. The enzyme catalyses GTP + H2O = GDP + phosphate + H(+). Functionally, GTP hydrolase that promotes the GTP-dependent binding of aminoacyl-tRNA to the A-site of ribosomes during protein biosynthesis. The polypeptide is Elongation factor 1-alpha (Metallosphaera sedula (strain ATCC 51363 / DSM 5348 / JCM 9185 / NBRC 15509 / TH2)).